The following is a 178-amino-acid chain: E1B protein, small T-antigen (178 aa).

Belongs to the adenoviridae E1B 19 kDa protein family.

It is found in the host cell membrane. It localises to the host nucleus envelope. The protein resides in the host nucleus lamina. Putative adenovirus Bcl-2 homolog that inhibits apoptosis induced by TNF or FAS pathways, as well as p53-mediated apoptosis. Without E1B 19K function, virus production is compromised because of premature death of host cell. Interacts with Bax protein in cell lysates. This Human adenovirus B serotype 7 (HAdV-7) protein is E1B protein, small T-antigen.